We begin with the raw amino-acid sequence, 275 residues long: Putative hydroxypyruvate isomerase (275 aa).

Residues Glu-147 and Glu-246 each act as proton donor/acceptor in the active site.

Belongs to the hyi family.

It carries out the reaction 3-hydroxypyruvate = 2-hydroxy-3-oxopropanoate. In terms of biological role, catalyzes the reversible isomerization between hydroxypyruvate and 2-hydroxy-3-oxopropanoate (also termed tartronate semialdehyde). This chain is Putative hydroxypyruvate isomerase (hyi), found in Xenopus laevis (African clawed frog).